We begin with the raw amino-acid sequence, 382 residues long: Dual-specificity RNA methyltransferase RlmN (382 aa).

The active-site Proton acceptor is the E94. Positions 100 to 336 (EANRGTLCVS…NTITRKTRGD (237 aa)) constitute a Radical SAM core domain. Cysteines 107 and 342 form a disulfide. [4Fe-4S] cluster is bound by residues C114, C118, and C121. S-adenosyl-L-methionine-binding positions include 168–169 (GE), S200, 222–224 (SLH), and N299. C342 acts as the S-methylcysteine intermediate in catalysis.

Belongs to the radical SAM superfamily. RlmN family. [4Fe-4S] cluster is required as a cofactor.

The protein resides in the cytoplasm. It carries out the reaction adenosine(2503) in 23S rRNA + 2 reduced [2Fe-2S]-[ferredoxin] + 2 S-adenosyl-L-methionine = 2-methyladenosine(2503) in 23S rRNA + 5'-deoxyadenosine + L-methionine + 2 oxidized [2Fe-2S]-[ferredoxin] + S-adenosyl-L-homocysteine. The catalysed reaction is adenosine(37) in tRNA + 2 reduced [2Fe-2S]-[ferredoxin] + 2 S-adenosyl-L-methionine = 2-methyladenosine(37) in tRNA + 5'-deoxyadenosine + L-methionine + 2 oxidized [2Fe-2S]-[ferredoxin] + S-adenosyl-L-homocysteine. Its function is as follows. Specifically methylates position 2 of adenine 2503 in 23S rRNA and position 2 of adenine 37 in tRNAs. m2A2503 modification seems to play a crucial role in the proofreading step occurring at the peptidyl transferase center and thus would serve to optimize ribosomal fidelity. This chain is Dual-specificity RNA methyltransferase RlmN, found in Legionella pneumophila (strain Lens).